A 541-amino-acid chain; its full sequence is Zinc finger protein 655 (541 aa).

A disordered region spans residues 1–22 (MEEVTSQEAAESPRGHFQPLEN). C2H2-type zinc fingers lie at residues 243-265 (YKCD…QRIH), 271-293 (YKCK…KRIH), 334-356 (YKCG…QRTH), 361-383 (CKCT…QRLH), 411-433 (YSCN…QRIH), and 439-461 (HECN…HKMH). The C2H2-type 7; degenerate zinc finger occupies 495–517 (FDCDAWEENFSQRAHLIQHERVH).

Belongs to the krueppel C2H2-type zinc-finger protein family. In terms of assembly, interacts with VAV1 and CDK4. Interacts with INTS13; promoting association with the integrator complex.

Its subcellular location is the nucleus. In terms of biological role, probable transcription factor. This chain is Zinc finger protein 655 (Znf655), found in Mus musculus (Mouse).